A 313-amino-acid polypeptide reads, in one-letter code: Porphobilinogen deaminase (313 aa).

The residue at position 242 (C242) is an S-(dipyrrolylmethanemethyl)cysteine.

It belongs to the HMBS family. Monomer. Dipyrromethane is required as a cofactor.

The catalysed reaction is 4 porphobilinogen + H2O = hydroxymethylbilane + 4 NH4(+). The protein operates within porphyrin-containing compound metabolism; protoporphyrin-IX biosynthesis; coproporphyrinogen-III from 5-aminolevulinate: step 2/4. In terms of biological role, tetrapolymerization of the monopyrrole PBG into the hydroxymethylbilane pre-uroporphyrinogen in several discrete steps. The polypeptide is Porphobilinogen deaminase (Yersinia pseudotuberculosis serotype O:1b (strain IP 31758)).